The sequence spans 187 residues: Large ribosomal subunit protein bL9 (187 aa).

The tract at residues 168–187 (EEAPAEEDVAAEETSEAAEA) is disordered.

This sequence belongs to the bacterial ribosomal protein bL9 family.

Its function is as follows. Binds to the 23S rRNA. In Paramagnetospirillum magneticum (strain ATCC 700264 / AMB-1) (Magnetospirillum magneticum), this protein is Large ribosomal subunit protein bL9.